The primary structure comprises 100 residues: Urease subunit gamma (100 aa).

The protein belongs to the urease gamma subunit family. Heterotrimer of UreA (gamma), UreB (beta) and UreC (alpha) subunits. Three heterotrimers associate to form the active enzyme.

It is found in the cytoplasm. The catalysed reaction is urea + 2 H2O + H(+) = hydrogencarbonate + 2 NH4(+). Its pathway is nitrogen metabolism; urea degradation; CO(2) and NH(3) from urea (urease route): step 1/1. The chain is Urease subunit gamma from Pseudomonas syringae pv. tomato (strain ATCC BAA-871 / DC3000).